A 144-amino-acid chain; its full sequence is MSRHYEVVFLVHPDQSEQVPAMIERYKSLIEGGNGTIHRLEDWGRRQLAYPIQNLVKAHYVLLNIEVDQAVLSELVESFRFNDAVLRHLVIKRDGPDTEQSLIMKSKDEKGDKPERSERRRRDDEEVDAAPAATDTDGDNAEAA.

The disordered stretch occupies residues 97 to 144 (DTEQSLIMKSKDEKGDKPERSERRRRDDEEVDAAPAATDTDGDNAEAA). The span at 105-124 (KSKDEKGDKPERSERRRRDD) shows a compositional bias: basic and acidic residues.

Belongs to the bacterial ribosomal protein bS6 family.

Its function is as follows. Binds together with bS18 to 16S ribosomal RNA. In Xanthomonas campestris pv. campestris (strain B100), this protein is Small ribosomal subunit protein bS6.